Consider the following 525-residue polypeptide: GMP synthase [glutamine-hydrolyzing] (525 aa).

The Glutamine amidotransferase type-1 domain occupies 9–207; that stretch reads RILILDFGSQ…VLDICACEAL (199 aa). The active-site Nucleophile is the C86. Residues H181 and E183 contribute to the active site. In terms of domain architecture, GMPS ATP-PPase spans 208 to 400; the sequence is WTPATIIEDA…LGLPYDMLYR (193 aa). 235 to 241 provides a ligand contact to ATP; it reads SGGVDSS.

As to quaternary structure, homodimer.

The enzyme catalyses XMP + L-glutamine + ATP + H2O = GMP + L-glutamate + AMP + diphosphate + 2 H(+). It participates in purine metabolism; GMP biosynthesis; GMP from XMP (L-Gln route): step 1/1. Its function is as follows. Catalyzes the synthesis of GMP from XMP. The polypeptide is GMP synthase [glutamine-hydrolyzing] (Yersinia enterocolitica serotype O:8 / biotype 1B (strain NCTC 13174 / 8081)).